Consider the following 700-residue polypeptide: Elongation factor G (700 aa).

The tr-type G domain maps to 13–288; that stretch reads SKIRNIGITA…AVIDYLPAPD (276 aa). GTP is bound by residues 22 to 29, 86 to 90, and 140 to 143; these read AHIDAGKT, DTPGH, and NKLD.

It belongs to the TRAFAC class translation factor GTPase superfamily. Classic translation factor GTPase family. EF-G/EF-2 subfamily.

Its subcellular location is the cytoplasm. Its function is as follows. Catalyzes the GTP-dependent ribosomal translocation step during translation elongation. During this step, the ribosome changes from the pre-translocational (PRE) to the post-translocational (POST) state as the newly formed A-site-bound peptidyl-tRNA and P-site-bound deacylated tRNA move to the P and E sites, respectively. Catalyzes the coordinated movement of the two tRNA molecules, the mRNA and conformational changes in the ribosome. This is Elongation factor G from Gluconobacter oxydans (strain 621H) (Gluconobacter suboxydans).